Consider the following 353-residue polypeptide: Outer membrane protein P5 (353 aa).

A signal peptide spans 1–21; that stretch reads MKKTAIALVVAGLAAASVAQA. 8 beta stranded membrane-spanning segments follow: residues 27–37, 58–69, 77–85, 104–115, 120–128, 158–167, 172–179, and 205–213; these read TFYAGVKAGQA, SFTYGVFGGYQI, LAVELGYDD, HGAHLSLKGSYE, LDVYGKAGV, GLFAVGAEYA, LAVRLEYQ, and SINAGISYR. The region spanning 227–353 is the OmpA-like domain; the sequence is VVSKTFSLNS…RVEIAVNGTK (127 aa). C326 and C338 are oxidised to a cystine.

It belongs to the outer membrane OOP (TC 1.B.6) superfamily. OmpA family. As to quaternary structure, monomer and homodimer.

The protein localises to the cell outer membrane. Its function is as follows. With TolR probably plays a role in maintaining the position of the peptidoglycan cell wall in the periplasm. Acts as a porin with low permeability that allows slow penetration of small solutes; an internal gate slows down solute passage. This chain is Outer membrane protein P5, found in Haemophilus influenzae.